The following is a 121-amino-acid chain: Small ribosomal subunit protein bS16 (121 aa).

Residues 85 to 110 (REARNNPKKAEPGKKAQERAAERAAK) show a composition bias toward basic and acidic residues. A disordered region spans residues 85–121 (REARNNPKKAEPGKKAQERAAERAAKAAEASEAASAE). The span at 111–121 (AAEASEAASAE) shows a compositional bias: low complexity.

The protein belongs to the bacterial ribosomal protein bS16 family.

This is Small ribosomal subunit protein bS16 from Azorhizobium caulinodans (strain ATCC 43989 / DSM 5975 / JCM 20966 / LMG 6465 / NBRC 14845 / NCIMB 13405 / ORS 571).